A 1040-amino-acid polypeptide reads, in one-letter code: Contactin-2 (1040 aa).

The first 30 residues, 1–30 (MGTATRRKPHLLLVAAVALVSSSAWSSALG), serve as a signal peptide directing secretion. Ig-like C2-type domains are found at residues 43–128 (PLSV…AILR), 133–222 (QEFS…SVFS), 239–322 (PSIK…GRII), 327–411 (PEWL…AELA), 417–504 (PDFR…GILS), and 509–603 (TKIT…ATVL). Disulfide bonds link cysteine 61–cysteine 111, cysteine 155–cysteine 207, cysteine 261–cysteine 306, and cysteine 348–cysteine 395. 3 N-linked (GlcNAc...) asparagine glycosylation sites follow: asparagine 76, asparagine 198, and asparagine 204. Residues asparagine 461, asparagine 477, asparagine 498, and asparagine 525 are each glycosylated (N-linked (GlcNAc...) asparagine). Fibronectin type-III domains follow at residues 610 to 708 (PPGG…TREA), 713 to 810 (APSG…SAEE), 815 to 910 (APTK…TMKP), and 915 to 1006 (PPGN…NGGT). The segment at 694–720 (GEPSGPSSKIRTREAAPSVAPSGLSGG) is disordered. The short motif at 794-796 (RGD) is the Cell attachment site element. Asparagine 830, asparagine 904, asparagine 918, and asparagine 940 each carry an N-linked (GlcNAc...) asparagine glycan. Residues 894–919 (AGTGPASPSANATTMKPPPRRPPGNI) are disordered. Asparagine 1012 carries GPI-anchor amidated asparagine lipidation. Positions 1013 to 1040 (MAVRPAPHPGTVISHSVAMLILIGSLEL) are cleaved as a propeptide — removed in mature form.

The protein belongs to the immunoglobulin superfamily. Contactin family.

It is found in the cell membrane. Functionally, in conjunction with another transmembrane protein, CNTNAP2, contributes to the organization of axonal domains at nodes of Ranvier by maintaining voltage-gated potassium channels at the juxtaparanodal region. May be involved in cell adhesion. This chain is Contactin-2 (CNTN2), found in Homo sapiens (Human).